Here is a 483-residue protein sequence, read N- to C-terminus: Protein nucleotidyltransferase YdiU (483 aa).

Residues Gly-81, Gly-83, Arg-84, Lys-103, Asp-115, Gly-116, Arg-166, and Arg-173 each contribute to the ATP site. The active-site Proton acceptor is the Asp-244. Mg(2+)-binding residues include Asn-245 and Asp-254. Asp-254 serves as a coordination point for ATP.

It belongs to the SELO family. It depends on Mg(2+) as a cofactor. Mn(2+) serves as cofactor.

The enzyme catalyses L-seryl-[protein] + ATP = 3-O-(5'-adenylyl)-L-seryl-[protein] + diphosphate. It catalyses the reaction L-threonyl-[protein] + ATP = 3-O-(5'-adenylyl)-L-threonyl-[protein] + diphosphate. It carries out the reaction L-tyrosyl-[protein] + ATP = O-(5'-adenylyl)-L-tyrosyl-[protein] + diphosphate. The catalysed reaction is L-histidyl-[protein] + UTP = N(tele)-(5'-uridylyl)-L-histidyl-[protein] + diphosphate. The enzyme catalyses L-seryl-[protein] + UTP = O-(5'-uridylyl)-L-seryl-[protein] + diphosphate. It catalyses the reaction L-tyrosyl-[protein] + UTP = O-(5'-uridylyl)-L-tyrosyl-[protein] + diphosphate. Its function is as follows. Nucleotidyltransferase involved in the post-translational modification of proteins. It can catalyze the addition of adenosine monophosphate (AMP) or uridine monophosphate (UMP) to a protein, resulting in modifications known as AMPylation and UMPylation. This is Protein nucleotidyltransferase YdiU from Shewanella pealeana (strain ATCC 700345 / ANG-SQ1).